The chain runs to 269 residues: Putative phosphoenolpyruvate synthase regulatory protein (269 aa).

149–156 (GVSRSGKT) is an ADP binding site.

Belongs to the pyruvate, phosphate/water dikinase regulatory protein family. PSRP subfamily.

The enzyme catalyses [pyruvate, water dikinase] + ADP = [pyruvate, water dikinase]-phosphate + AMP + H(+). It carries out the reaction [pyruvate, water dikinase]-phosphate + phosphate + H(+) = [pyruvate, water dikinase] + diphosphate. Bifunctional serine/threonine kinase and phosphorylase involved in the regulation of the phosphoenolpyruvate synthase (PEPS) by catalyzing its phosphorylation/dephosphorylation. The sequence is that of Putative phosphoenolpyruvate synthase regulatory protein from Colwellia psychrerythraea (strain 34H / ATCC BAA-681) (Vibrio psychroerythus).